The following is a 541-amino-acid chain: MAIMPYIRQGTVIDTLVILFSTWAFLGLIRVIRRRSNTTSLKGPPSESFIFGLHQIIHKSEDSDALYEQWAAEYGSVYQLSGPMGTKRVVLCDPKAILHLYSKDTFGFVQIGIIRAFHEKYFGRGIIWAEGESHRRQRKALTPAFSNVAIRNITPVFFDSAYKTKAAWDTIFESNPTKDGIIIEVQTWMNHISLDSIGIAGFSHDFGSIQGKPSAVLDVFDSFSSVQPDAMSTLMFTLAATFPIMLKLPNNRHALFAKLHQTILEISDELLESTRKEEEGKAGGGRGDAKSIIGSLIKAESANSHLRISQEEVIAQMNVLLLAGYETTSVSLTWALIELSRHPDVQQKLRDELSRFAATDPTWEELTNGLPYLDAVVHEILRLHAPLNETTRVVADDDVIPLGTPLQTASGNIVDRISVGKGTTVSIPTRCMNRLTGLWGDNAKEFVPDRWLNDAKDQLKSNEIQGYRHLLTFIDGPRTCLGKGFAVAEFKAVLSVLIRHYTFEFPDGPETKVVGYMSIVERPRVEGQDGAKVPLLVRRVE.

A helical membrane pass occupies residues 12–32 (VIDTLVILFSTWAFLGLIRVI). Cysteine 480 lines the heme pocket.

It belongs to the cytochrome P450 family. Heme serves as cofactor.

The protein resides in the membrane. Its pathway is secondary metabolite biosynthesis; terpenoid biosynthesis. Functionally, cytochrome P450 monooxygenase; part of the gene cluster that mediates the biosynthesis of clavilactone A, a meroterpenoid that features a unique benzo-fused ten-membered carbocyclic ring unit with an alpha,beta-epoxy-gamma-lactone moiety, forming an intriguing 10/5/3 tricyclic nested skeleton. Cytochrome P450 monooxygenases claO, claP, claQ, claU, and claW are close orthologs, suggesting that a redundant function or pseudogenes are present in the cla cluster. These monoxygenases are not involved in clavilactone A biosynthesis nor its modification. ClaR, ClaS and ClaT are sufficient to produce clavilactone A. The biosynthesis begins with the prenyltransferase claS that transfers geranyl pyrophosphate (GPP) to hydroquinone to produces geranylhydroquinone. The cytochrome P450 monooxygenase claR then catalyzes the diradical coupling reaction between the intramolecular hydroquinone and allyl moieties to form the benzo-fused ten-membered carbocyclic ring unit of wigantol. Finally the cytochrome P450 monooxygenase claT exquisitely and stereoselectively assembles the alpha,beta-epoxy-gamma-lactone moiety, producing clavilactone A via arnebinol A. In Ampulloclitocybe clavipes (Club foot), this protein is Cytochrome P450 monooxygenase claU.